Here is a 136-residue protein sequence, read N- to C-terminus: Large-conductance mechanosensitive channel (136 aa).

2 consecutive transmembrane segments (helical) span residues 9 to 29 (AFAVKGNVVDMAVGIIIGAAF) and 78 to 98 (FIQTVIDFLIIAFAIFIGVKA).

The protein belongs to the MscL family. In terms of assembly, homopentamer.

The protein resides in the cell inner membrane. In terms of biological role, channel that opens in response to stretch forces in the membrane lipid bilayer. May participate in the regulation of osmotic pressure changes within the cell. This is Large-conductance mechanosensitive channel from Azotobacter vinelandii (strain DJ / ATCC BAA-1303).